The chain runs to 118 residues: D-dopachrome decarboxylase-B (118 aa).

Residue Pro-2 is modified to N-acetylproline.

It belongs to the MIF family. As to quaternary structure, homotrimer.

Its subcellular location is the cytoplasm. The catalysed reaction is D-dopachrome + H(+) = 5,6-dihydroxyindole + CO2. In terms of biological role, tautomerization of D-dopachrome with decarboxylation to give 5,6-dihydroxyindole (DHI). The chain is D-dopachrome decarboxylase-B (ddt-b) from Xenopus laevis (African clawed frog).